Consider the following 102-residue polypeptide: Protein Tat (102 aa).

The segment covering 1–10 has biased composition (basic and acidic residues); that stretch reads MEPVDPRLEP. Residues 1 to 20 form a disordered region; the sequence is MEPVDPRLEPWNHPGSQPKT. The interval 1-24 is interaction with human CREBBP; it reads MEPVDPRLEPWNHPGSQPKTACNK. Residues 1-48 form a transactivation region; it reads MEPVDPRLEPWNHPGSQPKTACNKCYCKKCCYHCMCCFTKKGLGISYG. Zn(2+)-binding residues include cysteine 22, cysteine 25, and cysteine 27. The segment at 22–37 is cysteine-rich; it reads CNKCYCKKCCYHCMCC. Residue lysine 28 is modified to N6-acetyllysine; by host PCAF. The Zn(2+) site is built by cysteine 30, histidine 33, cysteine 34, and cysteine 37. The interval 38–48 is core; it reads FTKKGLGISYG. A disordered region spans residues 47–102; sequence YGRKKRSQRRRPPKSSKDHQDPIPEQPLSRQQPGDQTGQKKQKKALEGKTEADPCD. The segment covering 48–60 has biased composition (basic residues); sequence GRKKRSQRRRPPK. The Nuclear localization signal, RNA-binding (TAR), and protein transduction signature appears at 49 to 57; it reads RKKRSQRRR. Positions 49–87 are interaction with the host capping enzyme RNGTT; sequence RKKRSQRRRPPKSSKDHQDPIPEQPLSRQQPGDQTGQKK. N6-acetyllysine; by host EP300 and GCN5L2 is present on residues lysine 50 and lysine 51. Arginine 52 carries the post-translational modification Asymmetric dimethylarginine; by host PRMT6. Polar residues predominate over residues 74-85; the sequence is LSRQQPGDQTGQ. Residues 90 to 102 show a composition bias toward basic and acidic residues; it reads KALEGKTEADPCD.

The protein belongs to the lentiviruses Tat family. In terms of assembly, interacts with host CCNT1. Associates with the P-TEFb complex composed at least of Tat, P-TEFb (CDK9 and CCNT1), TAR RNA, RNA Pol II. Recruits the HATs CREBBP, TAF1/TFIID, EP300, PCAF and GCN5L2. Interacts with host KAT5/Tip60; this interaction targets the latter to degradation. Interacts with the host deacetylase SIRT1. Interacts with host capping enzyme RNGTT; this interaction stimulates RNGTT. Binds to host KDR, and to the host integrins ITGAV/ITGB3 and ITGA5/ITGB1. Interacts with host KPNB1/importin beta-1 without previous binding to KPNA1/importin alpha-1. Interacts with EIF2AK2. Interacts with host nucleosome assembly protein NAP1L1; this interaction may be required for the transport of Tat within the nucleus, since the two proteins interact at the nuclear rim. Interacts with host C1QBP/SF2P32; this interaction involves lysine-acetylated Tat. Interacts with the host chemokine receptors CCR2, CCR3 and CXCR4. Interacts with host DPP4/CD26; this interaction may trigger an anti-proliferative effect. Interacts with host LDLR. Interacts with the host extracellular matrix metalloproteinase MMP1. Interacts with host PRMT6; this interaction mediates Tat's methylation. Interacts with, and is ubiquitinated by MDM2/Hdm2. Interacts with host PSMC3 and HTATIP2. Interacts with STAB1; this interaction may overcome SATB1-mediated repression of IL2 and IL2RA (interleukin) in T cells by binding to the same domain than HDAC1. Interacts (when acetylated) with human CDK13, thereby increasing HIV-1 mRNA splicing and promoting the production of the doubly spliced HIV-1 protein Nef. Interacts with host TBP; this interaction modulates the activity of transcriptional pre-initiation complex. Interacts with host RELA. Interacts with host PLSCR1; this interaction negatively regulates Tat transactivation activity by altering its subcellular distribution. Asymmetrical arginine methylation by host PRMT6 seems to diminish the transactivation capacity of Tat and affects the interaction with host CCNT1. Post-translationally, acetylation by EP300, CREBBP, GCN5L2/GCN5 and PCAF regulates the transactivation activity of Tat. EP300-mediated acetylation of Lys-50 promotes dissociation of Tat from the TAR RNA through the competitive binding to PCAF's bromodomain. In addition, the non-acetylated Tat's N-terminus can also interact with PCAF. PCAF-mediated acetylation of Lys-28 enhances Tat's binding to CCNT1. Lys-50 is deacetylated by SIRT1. In terms of processing, polyubiquitination by host MDM2 does not target Tat to degradation, but activates its transactivation function and fosters interaction with CCNT1 and TAR RNA. Phosphorylated by EIF2AK2 on serine and threonine residues adjacent to the basic region important for TAR RNA binding and function. Phosphorylation of Tat by EIF2AK2 is dependent on the prior activation of EIF2AK2 by dsRNA.

It is found in the host nucleus. Its subcellular location is the host nucleolus. The protein localises to the host cytoplasm. It localises to the secreted. Transcriptional activator that increases RNA Pol II processivity, thereby increasing the level of full-length viral transcripts. Recognizes a hairpin structure at the 5'-LTR of the nascent viral mRNAs referred to as the transactivation responsive RNA element (TAR) and recruits the cyclin T1-CDK9 complex (P-TEFb complex) that will in turn hyperphosphorylate the RNA polymerase II to allow efficient elongation. The CDK9 component of P-TEFb and other Tat-activated kinases hyperphosphorylate the C-terminus of RNA Pol II that becomes stabilized and much more processive. Other factors such as HTATSF1/Tat-SF1, SUPT5H/SPT5, and HTATIP2 are also important for Tat's function. Besides its effect on RNA Pol II processivity, Tat induces chromatin remodeling of proviral genes by recruiting the histone acetyltransferases (HATs) CREBBP, EP300 and PCAF to the chromatin. This also contributes to the increase in proviral transcription rate, especially when the provirus integrates in transcriptionally silent region of the host genome. To ensure maximal activation of the LTR, Tat mediates nuclear translocation of NF-kappa-B by interacting with host RELA. Through its interaction with host TBP, Tat may also modulate transcription initiation. Tat can reactivate a latently infected cell by penetrating in it and transactivating its LTR promoter. In the cytoplasm, Tat is thought to act as a translational activator of HIV-1 mRNAs. In terms of biological role, extracellular circulating Tat can be endocytosed by surrounding uninfected cells via the binding to several surface receptors such as CD26, CXCR4, heparan sulfate proteoglycans (HSPG) or LDLR. Neurons are rarely infected, but they internalize Tat via their LDLR. Through its interaction with nuclear HATs, Tat is potentially able to control the acetylation-dependent cellular gene expression. Modulates the expression of many cellular genes involved in cell survival, proliferation or in coding for cytokines or cytokine receptors. Tat plays a role in T-cell and neurons apoptosis. Tat induced neurotoxicity and apoptosis probably contribute to neuroAIDS. Circulating Tat also acts as a chemokine-like and/or growth factor-like molecule that binds to specific receptors on the surface of the cells, affecting many cellular pathways. In the vascular system, Tat binds to ITGAV/ITGB3 and ITGA5/ITGB1 integrins dimers at the surface of endothelial cells and competes with bFGF for heparin-binding sites, leading to an excess of soluble bFGF. This chain is Protein Tat, found in Human immunodeficiency virus type 1 group N (isolate YBF106) (HIV-1).